A 200-amino-acid chain; its full sequence is NADH-quinone oxidoreductase subunit C (200 aa).

This sequence belongs to the complex I 30 kDa subunit family. In terms of assembly, NDH-1 is composed of 14 different subunits. Subunits NuoB, C, D, E, F, and G constitute the peripheral sector of the complex.

Its subcellular location is the cell inner membrane. It carries out the reaction a quinone + NADH + 5 H(+)(in) = a quinol + NAD(+) + 4 H(+)(out). Functionally, NDH-1 shuttles electrons from NADH, via FMN and iron-sulfur (Fe-S) centers, to quinones in the respiratory chain. The immediate electron acceptor for the enzyme in this species is believed to be ubiquinone. Couples the redox reaction to proton translocation (for every two electrons transferred, four hydrogen ions are translocated across the cytoplasmic membrane), and thus conserves the redox energy in a proton gradient. This Rhizobium etli (strain ATCC 51251 / DSM 11541 / JCM 21823 / NBRC 15573 / CFN 42) protein is NADH-quinone oxidoreductase subunit C.